A 311-amino-acid chain; its full sequence is tRNA-cytidine(32) 2-sulfurtransferase (311 aa).

The tract at residues 18–38 is disordered; sequence KVGADHGPSEENGSSHPLFDN. The PP-loop motif signature appears at 77-82; that stretch reads SGGKDS. Residues Cys-152, Cys-155, and Cys-243 each contribute to the [4Fe-4S] cluster site.

It belongs to the TtcA family. As to quaternary structure, homodimer. It depends on Mg(2+) as a cofactor. The cofactor is [4Fe-4S] cluster.

The protein localises to the cytoplasm. It catalyses the reaction cytidine(32) in tRNA + S-sulfanyl-L-cysteinyl-[cysteine desulfurase] + AH2 + ATP = 2-thiocytidine(32) in tRNA + L-cysteinyl-[cysteine desulfurase] + A + AMP + diphosphate + H(+). It functions in the pathway tRNA modification. Catalyzes the ATP-dependent 2-thiolation of cytidine in position 32 of tRNA, to form 2-thiocytidine (s(2)C32). The sulfur atoms are provided by the cysteine/cysteine desulfurase (IscS) system. The protein is tRNA-cytidine(32) 2-sulfurtransferase of Agrobacterium fabrum (strain C58 / ATCC 33970) (Agrobacterium tumefaciens (strain C58)).